Here is a 207-residue protein sequence, read N- to C-terminus: Holliday junction branch migration complex subunit RuvA (207 aa).

The interval 1 to 63 (MISSLRGTVL…EDSLQLFGFS (63 aa)) is domain I. The segment at 64–142 (GLEQLQVFEL…ACRRPSAPSA (79 aa)) is domain II. A flexible linker region spans residues 142–146 (ARRPS). The tract at residues 147-207 (APSSVSDSVL…RLGPANQAAR (61 aa)) is domain III.

This sequence belongs to the RuvA family. Homotetramer. Forms an RuvA(8)-RuvB(12)-Holliday junction (HJ) complex. HJ DNA is sandwiched between 2 RuvA tetramers; dsDNA enters through RuvA and exits via RuvB. An RuvB hexamer assembles on each DNA strand where it exits the tetramer. Each RuvB hexamer is contacted by two RuvA subunits (via domain III) on 2 adjacent RuvB subunits; this complex drives branch migration. In the full resolvosome a probable DNA-RuvA(4)-RuvB(12)-RuvC(2) complex forms which resolves the HJ.

Its subcellular location is the cytoplasm. Functionally, the RuvA-RuvB-RuvC complex processes Holliday junction (HJ) DNA during genetic recombination and DNA repair, while the RuvA-RuvB complex plays an important role in the rescue of blocked DNA replication forks via replication fork reversal (RFR). RuvA specifically binds to HJ cruciform DNA, conferring on it an open structure. The RuvB hexamer acts as an ATP-dependent pump, pulling dsDNA into and through the RuvAB complex. HJ branch migration allows RuvC to scan DNA until it finds its consensus sequence, where it cleaves and resolves the cruciform DNA. The protein is Holliday junction branch migration complex subunit RuvA of Leifsonia xyli subsp. xyli (strain CTCB07).